The sequence spans 173 residues: Telomerase RNA component interacting RNase (173 aa).

Basic and acidic residues predominate over residues 1-12; the sequence is MAARGRRAEPPG. Residues 1 to 119 form a disordered region; sequence MAARGRRAEP…LSFVGKRRGG (119 aa). 2 stretches are compositionally biased toward low complexity: residues 14-23 and 43-52; these read EAPGPAGSGR and SGSSPVSSGV. A compositionally biased stretch (basic and acidic residues) spans 64–79; the sequence is LFKRKMEEEQRQRQEE. Pro residues predominate over residues 80 to 90; the sequence is PPPGPQRPDPP. Position 143 is an N6-acetyllysine (Lys-143).

As to quaternary structure, part of the telomerase RNA 3' end complex which contains about 488 proteins.

Its function is as follows. Exoribonuclease that is part of the telomerase RNA 3' end processing complex and which has the ability to cleave all four unpaired RNA nucleotides from the 5' end or 3' end with higher efficiency for purine bases. This is Telomerase RNA component interacting RNase from Mus musculus (Mouse).